A 267-amino-acid chain; its full sequence is uncharacterized protein (267 aa).

The helical transmembrane segment at 30-52 (FMRIFLLFLFFVLFTFGVEGYVI) threads the bilayer.

Its subcellular location is the membrane. This is an uncharacterized protein from Aquifex aeolicus (strain VF5).